The chain runs to 1300 residues: ATP-dependent RNA helicase HrpA (1300 aa).

In terms of domain architecture, Helicase ATP-binding spans 87-250 (LEAIRDHQVV…FNNAPIIEVS (164 aa)). 100-107 (GETGSGKT) serves as a coordination point for ATP. The short motif at 197–200 (DEAH) is the DEAH box element. Residues 274–444 (QLQAIFDAVD…SVILQMTALG (171 aa)) enclose the Helicase C-terminal domain.

The protein belongs to the DEAD box helicase family. DEAH subfamily.

The enzyme catalyses ATP + H2O = ADP + phosphate + H(+). Not yet known. The protein is ATP-dependent RNA helicase HrpA (hrpA) of Escherichia coli (strain K12).